Consider the following 221-residue polypeptide: U1 small nuclear ribonucleoprotein C (221 aa).

The Matrin-type zinc finger occupies 4–36 (YFCDYCDTYLTHDSPSVRKTHCNGRKHKENVRV). Positions 100 to 168 (SNPFPTSQAG…PPGAPTLPQP (69 aa)) are disordered. A compositionally biased stretch (pro residues) spans 134–166 (APAPPRMPGPLLMTPPPGAAAPGMAPPGAPTLP).

This sequence belongs to the U1 small nuclear ribonucleoprotein C family. In terms of assembly, U1 snRNP is composed of the 7 core Sm proteins B/B', D1, D2, D3, E, F and G that assemble in a heptameric protein ring on the Sm site of the small nuclear RNA to form the core snRNP, and at least 3 U1 snRNP-specific proteins U1-70K, U1-A and U1-C. U1-C interacts with U1 snRNA and the 5' splice-site region of the pre-mRNA.

It is found in the nucleus. Functionally, component of the spliceosomal U1 snRNP, which is essential for recognition of the pre-mRNA 5' splice-site and the subsequent assembly of the spliceosome. U1-C is directly involved in initial 5' splice-site recognition for both constitutive and regulated alternative splicing. The interaction with the 5' splice-site seems to precede base-pairing between the pre-mRNA and the U1 snRNA. Stimulates commitment or early (E) complex formation by stabilizing the base pairing of the 5' end of the U1 snRNA and the 5' splice-site region. In Branchiostoma floridae (Florida lancelet), this protein is U1 small nuclear ribonucleoprotein C.